Reading from the N-terminus, the 71-residue chain is Conotoxin De13.1 (71 aa).

Residues 1–19 (MSGMGVLLLVLLLVMPLAA) form the signal peptide. The propeptide occupies 20-35 (FHQDGEGEATRRSGGL). Pro-40 and Pro-44 each carry 4-hydroxyproline. 6'-bromotryptophan is present on Trp-51. Glu-52 carries the post-translational modification 4-carboxyglutamate. At Lys-55 the chain carries 5-hydroxylysine. Pro-58 bears the 4-hydroxyproline mark. His-69 is subject to Histidine amide.

The protein belongs to the conotoxin G superfamily. Contains 4 disulfide bonds. Expressed by the venom duct.

It localises to the secreted. The polypeptide is Conotoxin De13.1 (Conasprella delessertii (Sozon's cone)).